Reading from the N-terminus, the 237-residue chain is Large ribosomal subunit protein uL1 (237 aa).

The protein belongs to the universal ribosomal protein uL1 family. Part of the 50S ribosomal subunit.

Binds directly to 23S rRNA. The L1 stalk is quite mobile in the ribosome, and is involved in E site tRNA release. In terms of biological role, protein L1 is also a translational repressor protein, it controls the translation of the L11 operon by binding to its mRNA. This chain is Large ribosomal subunit protein uL1, found in Thermosynechococcus vestitus (strain NIES-2133 / IAM M-273 / BP-1).